Here is a 330-residue protein sequence, read N- to C-terminus: Pyridoxal 5'-phosphate synthase subunit PdxS (330 aa).

Position 23 (Asp23) interacts with D-ribose 5-phosphate. Residue Lys80 is the Schiff-base intermediate with D-ribose 5-phosphate of the active site. Gly152 is a binding site for D-ribose 5-phosphate. Arg164 is a D-glyceraldehyde 3-phosphate binding site. Residues Gly250 and 271–272 (GS) contribute to the D-ribose 5-phosphate site.

It belongs to the PdxS/SNZ family. In the presence of PdxT, forms a dodecamer of heterodimers.

It catalyses the reaction aldehydo-D-ribose 5-phosphate + D-glyceraldehyde 3-phosphate + L-glutamine = pyridoxal 5'-phosphate + L-glutamate + phosphate + 3 H2O + H(+). The protein operates within cofactor biosynthesis; pyridoxal 5'-phosphate biosynthesis. Functionally, catalyzes the formation of pyridoxal 5'-phosphate from ribose 5-phosphate (RBP), glyceraldehyde 3-phosphate (G3P) and ammonia. The ammonia is provided by the PdxT subunit. Can also use ribulose 5-phosphate and dihydroxyacetone phosphate as substrates, resulting from enzyme-catalyzed isomerization of RBP and G3P, respectively. The sequence is that of Pyridoxal 5'-phosphate synthase subunit PdxS from Methanocaldococcus jannaschii (strain ATCC 43067 / DSM 2661 / JAL-1 / JCM 10045 / NBRC 100440) (Methanococcus jannaschii).